A 186-amino-acid polypeptide reads, in one-letter code: MIRGLFVGRFQPVHKGHIKALEFVFSQVDEVIIGIGSAQASHTLKNPFTTGERMEMLIRAIEEAGFKKRYYLVPLPDINFNAIWVPYVESMVPKFHVVFTGNSLVAQLFRERGYKVVVQPMFRKDILSATEIRRRMIAGEPWEDLVPKSVVEYIKEIKGVERLRNLATNLESSEKELQAPIRIPEF.

This sequence belongs to the archaeal NMN adenylyltransferase family.

The protein resides in the cytoplasm. It catalyses the reaction beta-nicotinamide D-ribonucleotide + ATP + H(+) = diphosphate + NAD(+). It functions in the pathway cofactor biosynthesis; NAD(+) biosynthesis; NAD(+) from nicotinamide D-ribonucleotide: step 1/1. This Pyrococcus abyssi (strain GE5 / Orsay) protein is Nicotinamide-nucleotide adenylyltransferase.